A 131-amino-acid chain; its full sequence is Ribosome-binding factor A (131 aa).

Belongs to the RbfA family. As to quaternary structure, monomer. Binds 30S ribosomal subunits, but not 50S ribosomal subunits or 70S ribosomes.

Its subcellular location is the cytoplasm. Functionally, one of several proteins that assist in the late maturation steps of the functional core of the 30S ribosomal subunit. Associates with free 30S ribosomal subunits (but not with 30S subunits that are part of 70S ribosomes or polysomes). Required for efficient processing of 16S rRNA. May interact with the 5'-terminal helix region of 16S rRNA. This Thermotoga sp. (strain RQ2) protein is Ribosome-binding factor A.